A 157-amino-acid chain; its full sequence is Protein NrdI (157 aa).

This sequence belongs to the NrdI family.

Functionally, probably involved in ribonucleotide reductase function. This is Protein NrdI from Mycoplasma mycoides subsp. mycoides SC (strain CCUG 32753 / NCTC 10114 / PG1).